A 333-amino-acid polypeptide reads, in one-letter code: Ketol-acid reductoisomerase (NADP(+)) (333 aa).

Residues 1–179 form the KARI N-terminal Rossmann domain; the sequence is MFYDDNADLS…GGTRAGVIKT (179 aa). NADP(+)-binding positions include 22–25, Ser-48, Ser-50, and 80–83; these read YGSQ and DTAQ. Residue His-105 is part of the active site. Position 131 (Gly-131) interacts with NADP(+). One can recognise a KARI C-terminal knotted domain in the interval 180–325; sequence TFKDETETDL…KKLRDLMSWV (146 aa). Residues Asp-188, Glu-192, Glu-224, and Glu-228 each contribute to the Mg(2+) site. Position 249 (Ser-249) interacts with substrate.

Belongs to the ketol-acid reductoisomerase family. Requires Mg(2+) as cofactor.

The catalysed reaction is (2R)-2,3-dihydroxy-3-methylbutanoate + NADP(+) = (2S)-2-acetolactate + NADPH + H(+). The enzyme catalyses (2R,3R)-2,3-dihydroxy-3-methylpentanoate + NADP(+) = (S)-2-ethyl-2-hydroxy-3-oxobutanoate + NADPH + H(+). The protein operates within amino-acid biosynthesis; L-isoleucine biosynthesis; L-isoleucine from 2-oxobutanoate: step 2/4. It functions in the pathway amino-acid biosynthesis; L-valine biosynthesis; L-valine from pyruvate: step 2/4. Involved in the biosynthesis of branched-chain amino acids (BCAA). Catalyzes an alkyl-migration followed by a ketol-acid reduction of (S)-2-acetolactate (S2AL) to yield (R)-2,3-dihydroxy-isovalerate. In the isomerase reaction, S2AL is rearranged via a Mg-dependent methyl migration to produce 3-hydroxy-3-methyl-2-ketobutyrate (HMKB). In the reductase reaction, this 2-ketoacid undergoes a metal-dependent reduction by NADPH to yield (R)-2,3-dihydroxy-isovalerate. The polypeptide is Ketol-acid reductoisomerase (NADP(+)) (Mycobacterium leprae (strain TN)).